The following is a 68-amino-acid chain: Sec-independent protein translocase protein TatA (68 aa).

The chain crosses the membrane as a helical span at residues 1 to 21 (MGSLSIWHWLIVLLIVVLVFG). The interval 42 to 68 (GMNEGAKDGQPPAKDAGRIIDGEADKK) is disordered. Positions 56–68 (DAGRIIDGEADKK) are enriched in basic and acidic residues.

The protein belongs to the TatA/E family. As to quaternary structure, the Tat system comprises two distinct complexes: a TatABC complex, containing multiple copies of TatA, TatB and TatC subunits, and a separate TatA complex, containing only TatA subunits. Substrates initially bind to the TatABC complex, which probably triggers association of the separate TatA complex to form the active translocon.

Its subcellular location is the cell inner membrane. Its function is as follows. Part of the twin-arginine translocation (Tat) system that transports large folded proteins containing a characteristic twin-arginine motif in their signal peptide across membranes. TatA could form the protein-conducting channel of the Tat system. This is Sec-independent protein translocase protein TatA from Chromobacterium violaceum (strain ATCC 12472 / DSM 30191 / JCM 1249 / CCUG 213 / NBRC 12614 / NCIMB 9131 / NCTC 9757 / MK).